Consider the following 445-residue polypeptide: Probable D-serine dehydratase (445 aa).

An N6-(pyridoxal phosphate)lysine modification is found at Lys-111.

This sequence belongs to the serine/threonine dehydratase family. DsdA subfamily. Pyridoxal 5'-phosphate serves as cofactor.

It catalyses the reaction D-serine = pyruvate + NH4(+). In Burkholderia pseudomallei (strain K96243), this protein is Probable D-serine dehydratase.